The chain runs to 486 residues: Zinc finger chaperone ZPR1 (486 aa).

The disordered stretch occupies residues 1–31; the sequence is MSEQKEDLFKPVGEAAAEVEDESIAEQNKAN. Phosphoserine is present on Ser-23. 2 consecutive C4-type zinc fingers follow at residues 54-86 and 295-327; these read CMNC…CPHC and CPSC…CDHC. Thr-407 bears the Phosphothreonine mark.

This sequence belongs to the ZPR1 family. Interacts with elongation factor 1-alpha.

The protein resides in the cytoplasm. Its subcellular location is the nucleus. Acts as a protein folding chaperone for elongation factor 1-alpha. This Saccharomyces cerevisiae (strain ATCC 204508 / S288c) (Baker's yeast) protein is Zinc finger chaperone ZPR1.